The primary structure comprises 175 residues: uncharacterized protein (175 aa).

The disordered stretch occupies residues 113-175; that stretch reads AQLPRDSRGN…RTRSGGLERL (63 aa).

This is an uncharacterized protein from Bos taurus (Bovine).